Here is a 490-residue protein sequence, read N- to C-terminus: uncharacterized protein (490 aa).

Residues 370-385 are compositionally biased toward low complexity; it reads FSMKRPSSSSSSLSGS. Residues 370 to 406 are disordered; it reads FSMKRPSSSSSSLSGSWHGDTENSVKQSLASPSEASL. Residues 391–406 are compositionally biased toward polar residues; it reads ENSVKQSLASPSEASL.

It localises to the cytoplasm. It is found in the nucleus. This is an uncharacterized protein from Schizosaccharomyces pombe (strain 972 / ATCC 24843) (Fission yeast).